The chain runs to 297 residues: Phosphoribosylaminoimidazole-succinocarboxamide synthase (297 aa).

This sequence belongs to the SAICAR synthetase family.

It catalyses the reaction 5-amino-1-(5-phospho-D-ribosyl)imidazole-4-carboxylate + L-aspartate + ATP = (2S)-2-[5-amino-1-(5-phospho-beta-D-ribosyl)imidazole-4-carboxamido]succinate + ADP + phosphate + 2 H(+). Its pathway is purine metabolism; IMP biosynthesis via de novo pathway; 5-amino-1-(5-phospho-D-ribosyl)imidazole-4-carboxamide from 5-amino-1-(5-phospho-D-ribosyl)imidazole-4-carboxylate: step 1/2. This Corynebacterium glutamicum (strain R) protein is Phosphoribosylaminoimidazole-succinocarboxamide synthase.